We begin with the raw amino-acid sequence, 719 residues long: MALKDYAIEKEKVKKFLQEFYYENELGKKQFKYGTQLVHLAHREQVALYVDLDDIAEDDPELVDSICENAKRYSRLFGDVVQELLPEYKEKEVVNKDVLDVYIEHRLMMEQRSRDPGAVRNPQNQYPSELMRRFELYFRGPSSSKPRVIREVRADSVGKLLTVRGIVTRVSEVKPRMVVATYTCDQCGAETYQPIQSPTFMPLIMCPSQECQTNRSGGRLYLQTRGSKFVKFQEMKIQEHSDQVPVGNIPRSITVVLEGENTRIAQPGDHVSVTGIFLPVLRTGFQQMAQGLLSETYLEAHWIVKMTKSDDDVSGAGELSSEELKQIAEEDFYEKLAASIAPEIYGHEDVKKALLLLLVGGVDQSPQGMKIRGNIHICLMGDPGVAKSQLLSYIDRLAPRSQYTTGRGSSGVGLTAAVLRDSVSGELTLEGGALVLADQGVCCIDEFDKMAEADRTAIHEVMEQQTISIAKAGILTTLNARCSILAAANPAYGRYNPRRSLEQNVQLPAALLSRFDLLWLIQDRPDRDNDLRLAQHITYVHQHSRQPPAQFEPLDMKLMRRYIAMCHERQPTVPESLADYITAAYVEMRREARASKDATYTSARTLLAILRLSTALARLRMVDIVEKEDVNEAIRLMEMSKDSLLGEKGQTARTQRPADVIFATIRELVSRGRSVHFSEAEQRCISRGFTPAQFQAALDEYEELNVWQVNTSRTRITFV.

At alanine 2 the chain carries N-acetylalanine. Residues lysine 15 and lysine 28 each participate in a glycyl lysine isopeptide (Lys-Gly) (interchain with G-Cter in SUMO2) cross-link. Phosphoserine is present on serine 314. An MCM domain is found at 332–538 (FYEKLAASIA…NDLRLAQHIT (207 aa)). Tyrosine 345 contacts ATP. Serine 365 bears the Phosphoserine mark. 5 residues coordinate ATP: glycine 384, alanine 386, lysine 387, serine 388, and asparagine 489. Residue serine 500 is modified to Phosphoserine. An Arginine finger motif is present at residues 513-516 (SRFD). ATP is bound at residue arginine 514. Residues 521 to 564 (IQDRPDRDNDLRLAQHITYVHQHSRQPPAQFEPLDMKLMRRYIA) are interaction with RAD17. The segment at 577–719 (LADYITAAYV…NTSRTRITFV (143 aa)) is interaction with ATRIP. Arginine 604 serves as a coordination point for ATP. Serine 678 carries the post-translational modification Phosphoserine.

The protein belongs to the MCM family. As to quaternary structure, component of the MCM2-7 complex. The complex forms a toroidal hexameric ring with the proposed subunit order MCM2-MCM6-MCM4-MCM7-MCM3-MCM5. Component of the CMG helicase complex, a hexameric ring of related MCM2-7 subunits stabilized by CDC45 and the tetrameric GINS complex. Interacts with the ATR-ATRIP complex and with RAD17. Interacts with TIPIN. Interacts with MCMBP. Interacts with ANKRD17. Component of the replisome complex composed of at least DONSON, MCM2, MCM7, PCNA and TICRR. Post-translationally, O-glycosylated (O-GlcNAcylated), in a cell cycle-dependent manner. Ubiquitinated by ECS(LRR1) E3 ubiquitin-protein ligase complex when forks converge following formation of DNA interstrand cross-links. During mitosis, ubiquitinated by TRAIP when forks converge following formation of DNA interstrand cross-links. Short ubiquitin chains on MCM7 promote recruitment of DNA glycosylase NEIL3. If the interstrand cross-link cannot be cleaved by NEIL3, the ubiquitin chains continue to grow on MCM7, promoting the unloading of the CMG helicase complex by the VCP/p97 ATPase.

It is found in the nucleus. The protein resides in the chromosome. The enzyme catalyses ATP + H2O = ADP + phosphate + H(+). Functionally, acts as a component of the MCM2-7 complex (MCM complex) which is the replicative helicase essential for 'once per cell cycle' DNA replication initiation and elongation in eukaryotic cells. Core component of CDC45-MCM-GINS (CMG) helicase, the molecular machine that unwinds template DNA during replication, and around which the replisome is built. The active ATPase sites in the MCM2-7 ring are formed through the interaction surfaces of two neighboring subunits such that a critical structure of a conserved arginine finger motif is provided in trans relative to the ATP-binding site of the Walker A box of the adjacent subunit. The six ATPase active sites, however, are likely to contribute differentially to the complex helicase activity. Uncomplexed form does not show ATPase or DNA helicase. Required for S-phase checkpoint activation upon UV-induced damage. This chain is DNA replication licensing factor MCM7 (Mcm7), found in Mus musculus (Mouse).